An 86-amino-acid polypeptide reads, in one-letter code: Cytochrome c oxidase subunit 6B1 (86 aa).

At A2 the chain carries N-acetylalanine. The CHCH domain maps to T27 to W73. A Cx9C motif motif is present at residues C30–C40. 2 disulfide bridges follow: C30–C65 and C40–C54. The Cx10C motif motif lies at C54 to C65. K62 bears the N6-acetyllysine mark.

This sequence belongs to the cytochrome c oxidase subunit 6B family. In terms of assembly, component of the cytochrome c oxidase (complex IV, CIV), a multisubunit enzyme composed of 14 subunits. The complex is composed of a catalytic core of 3 subunits MT-CO1, MT-CO2 and MT-CO3, encoded in the mitochondrial DNA, and 11 supernumerary subunits COX4I1 (or COX4I2), COX5A, COX5B, COX6A2 (or COX6A1), COX6B1 (or COX6B2), COX6C, COX7A1 (or COX7A2), COX7B, COX7C, COX8B and NDUFA4, which are encoded in the nuclear genome. The complex exists as a monomer or a dimer and forms supercomplexes (SCs) in the inner mitochondrial membrane with NADH-ubiquinone oxidoreductase (complex I, CI) and ubiquinol-cytochrome c oxidoreductase (cytochrome b-c1 complex, complex III, CIII), resulting in different assemblies (supercomplex SCI(1)III(2)IV(1) and megacomplex MCI(2)III(2)IV(2)).

Its subcellular location is the mitochondrion inner membrane. Its pathway is energy metabolism; oxidative phosphorylation. Component of the cytochrome c oxidase, the last enzyme in the mitochondrial electron transport chain which drives oxidative phosphorylation. The respiratory chain contains 3 multisubunit complexes succinate dehydrogenase (complex II, CII), ubiquinol-cytochrome c oxidoreductase (cytochrome b-c1 complex, complex III, CIII) and cytochrome c oxidase (complex IV, CIV), that cooperate to transfer electrons derived from NADH and succinate to molecular oxygen, creating an electrochemical gradient over the inner membrane that drives transmembrane transport and the ATP synthase. Cytochrome c oxidase is the component of the respiratory chain that catalyzes the reduction of oxygen to water. Electrons originating from reduced cytochrome c in the intermembrane space (IMS) are transferred via the dinuclear copper A center (CU(A)) of subunit 2 and heme A of subunit 1 to the active site in subunit 1, a binuclear center (BNC) formed by heme A3 and copper B (CU(B)). The BNC reduces molecular oxygen to 2 water molecules using 4 electrons from cytochrome c in the IMS and 4 protons from the mitochondrial matrix. The protein is Cytochrome c oxidase subunit 6B1 (COX6B1) of Bos taurus (Bovine).